The sequence spans 566 residues: Proline--tRNA ligase (566 aa).

The protein belongs to the class-II aminoacyl-tRNA synthetase family. ProS type 1 subfamily. As to quaternary structure, homodimer.

It localises to the cytoplasm. It catalyses the reaction tRNA(Pro) + L-proline + ATP = L-prolyl-tRNA(Pro) + AMP + diphosphate. In terms of biological role, catalyzes the attachment of proline to tRNA(Pro) in a two-step reaction: proline is first activated by ATP to form Pro-AMP and then transferred to the acceptor end of tRNA(Pro). As ProRS can inadvertently accommodate and process non-cognate amino acids such as alanine and cysteine, to avoid such errors it has two additional distinct editing activities against alanine. One activity is designated as 'pretransfer' editing and involves the tRNA(Pro)-independent hydrolysis of activated Ala-AMP. The other activity is designated 'posttransfer' editing and involves deacylation of mischarged Ala-tRNA(Pro). The misacylated Cys-tRNA(Pro) is not edited by ProRS. The protein is Proline--tRNA ligase of Bacillus cereus (strain B4264).